Consider the following 958-residue polypeptide: UPF0182 protein TW644 (958 aa).

A run of 7 helical transmembrane segments spans residues 14 to 34, 59 to 79, 107 to 127, 166 to 186, 205 to 225, 249 to 269, and 280 to 300; these read IAIL…FFLV, IFVV…LCMF, KIVV…FAAS, LFFL…ISVV, VQYA…FWLN, LIPG…LFCI, and IIGV…LPWG.

The protein belongs to the UPF0182 family.

The protein resides in the cell membrane. The chain is UPF0182 protein TW644 from Tropheryma whipplei (strain TW08/27) (Whipple's bacillus).